The primary structure comprises 341 residues: tRNA-specific 2-thiouridylase MnmA (341 aa).

Residues 8–15 (GMSGGVDS) and Met34 contribute to the ATP site. Residue Cys94 is the Nucleophile of the active site. Cys94 and Cys188 form a disulfide bridge. Gly118 serves as a coordination point for ATP. Residues 136–138 (KDQ) are interaction with tRNA. Cys188 acts as the Cysteine persulfide intermediate in catalysis. The segment at 290-291 (RY) is interaction with tRNA.

The protein belongs to the MnmA/TRMU family.

It localises to the cytoplasm. The enzyme catalyses S-sulfanyl-L-cysteinyl-[protein] + uridine(34) in tRNA + AH2 + ATP = 2-thiouridine(34) in tRNA + L-cysteinyl-[protein] + A + AMP + diphosphate + H(+). In terms of biological role, catalyzes the 2-thiolation of uridine at the wobble position (U34) of tRNA, leading to the formation of s(2)U34. The chain is tRNA-specific 2-thiouridylase MnmA from Sulfurimonas denitrificans (strain ATCC 33889 / DSM 1251) (Thiomicrospira denitrificans (strain ATCC 33889 / DSM 1251)).